We begin with the raw amino-acid sequence, 346 residues long: G-protein coupled receptor homolog U12 (346 aa).

At 1–31 the chain is on the extracellular side; the sequence is MICYSFAKNVTFAFLIILQNFFSQHDEEYKY. The chain crosses the membrane as a helical span at residues 32 to 56; that stretch reads NYTCITPTVRKAQRLESVINGIMLT. The Cytoplasmic segment spans residues 57 to 83; that stretch reads LILPVSTVVICTLLIYYKWTKQTITSP. The chain crosses the membrane as a helical span at residues 84-108; sequence YLITLFISDSLHSLTVLLLTLNREA. The Extracellular portion of the chain corresponds to 109 to 115; that stretch reads LTNLNQA. Residues 116–142 form a helical membrane-spanning segment; it reads LCQCVLFVYSASCTYSLCMLAVISTIR. Over 143–159 the chain is Cytoplasmic; that stretch reads YRTLQRRTLNDKNNNHI. A helical membrane pass occupies residues 160 to 181; it reads KRNVGILFLSSAMCAIPAVLYV. Residues 182-208 lie on the Extracellular side of the membrane; that stretch reads QVEKKKGNYGKCNIHISTQKAYDLFIG. The helical transmembrane segment at 209–229 threads the bilayer; the sequence is IKIVYCFLWGIFPTVIFSYFY. The Cytoplasmic portion of the chain corresponds to 230–245; the sequence is VIFGKTLRALTQSKHN. A helical transmembrane segment spans residues 246–272; that stretch reads KTLSFISLLILSFLCIQIPNLLVMSVE. Topologically, residues 273–286 are extracellular; it reads IFFLYIANTSCLGT. The helical transmembrane segment at 287 to 310 threads the bilayer; that stretch reads IQREIVQIISRLMPEIHCLSNPLV. Residues 311–346 are Cytoplasmic-facing; that stretch reads YAFTRTDFRLRFYDFIKCNLCNSSLKRKRNPLTIKN.

Belongs to the G-protein coupled receptor 1 family.

It localises to the host cell membrane. In Homo sapiens (Human), this protein is G-protein coupled receptor homolog U12 (U12).